The primary structure comprises 197 residues: Holliday junction branch migration complex subunit RuvA (197 aa).

The interval 1–63 (MINKIHGKVI…ENELKLFGFL (63 aa)) is domain I. The tract at residues 64 to 139 (NSDEREIFKE…KLLINSELES (76 aa)) is domain II. Residue serine 139 is a region of interest, flexible linker. Positions 140 to 197 (TGLFRFKELEESIVSMGFDRKIVNSKIREAFNLAEFANLKDSEKEQFLFKEVLKRISN) are domain III.

This sequence belongs to the RuvA family. Homotetramer. Forms an RuvA(8)-RuvB(12)-Holliday junction (HJ) complex. HJ DNA is sandwiched between 2 RuvA tetramers; dsDNA enters through RuvA and exits via RuvB. An RuvB hexamer assembles on each DNA strand where it exits the tetramer. Each RuvB hexamer is contacted by two RuvA subunits (via domain III) on 2 adjacent RuvB subunits; this complex drives branch migration. In the full resolvosome a probable DNA-RuvA(4)-RuvB(12)-RuvC(2) complex forms which resolves the HJ.

It localises to the cytoplasm. Its function is as follows. The RuvA-RuvB-RuvC complex processes Holliday junction (HJ) DNA during genetic recombination and DNA repair, while the RuvA-RuvB complex plays an important role in the rescue of blocked DNA replication forks via replication fork reversal (RFR). RuvA specifically binds to HJ cruciform DNA, conferring on it an open structure. The RuvB hexamer acts as an ATP-dependent pump, pulling dsDNA into and through the RuvAB complex. HJ branch migration allows RuvC to scan DNA until it finds its consensus sequence, where it cleaves and resolves the cruciform DNA. This is Holliday junction branch migration complex subunit RuvA from Borreliella burgdorferi (strain ATCC 35210 / DSM 4680 / CIP 102532 / B31) (Borrelia burgdorferi).